A 46-amino-acid chain; its full sequence is Protein PsbN (46 aa).

Residues 10–30 form a helical membrane-spanning segment; sequence VSIAVLTALLGLTGFGIYTAF.

It belongs to the PsbN family.

The protein resides in the cellular thylakoid membrane. Functionally, may play a role in photosystem I and II biogenesis. In Synechococcus sp. (strain RCC307), this protein is Protein PsbN.